We begin with the raw amino-acid sequence, 189 residues long: Peptidyl-tRNA hydrolase (189 aa).

Tyr15 contacts tRNA. His20 acts as the Proton acceptor in catalysis. Positions 67, 69, and 115 each coordinate tRNA.

Belongs to the PTH family. In terms of assembly, monomer.

The protein localises to the cytoplasm. The enzyme catalyses an N-acyl-L-alpha-aminoacyl-tRNA + H2O = an N-acyl-L-amino acid + a tRNA + H(+). Hydrolyzes ribosome-free peptidyl-tRNAs (with 1 or more amino acids incorporated), which drop off the ribosome during protein synthesis, or as a result of ribosome stalling. In terms of biological role, catalyzes the release of premature peptidyl moieties from peptidyl-tRNA molecules trapped in stalled 50S ribosomal subunits, and thus maintains levels of free tRNAs and 50S ribosomes. The protein is Peptidyl-tRNA hydrolase of Symbiobacterium thermophilum (strain DSM 24528 / JCM 14929 / IAM 14863 / T).